A 921-amino-acid chain; its full sequence is Collagen alpha-1(IX) chain (921 aa).

Residues 1-23 (MKTCWKIPVFFFVCSFLEPWASA) form the signal peptide. The tract at residues 24–268 (AVKRRPRFPV…ITPSQTTDER (245 aa)) is nonhelical region (NC4). Disulfide bonds link Cys44–Cys242 and Cys198–Cys252. The region spanning 50–244 (GQDDLPGFDL…LQWMLIHCDP (195 aa)) is the Laminin G-like domain. N-linked (GlcNAc...) asparagine glycosylation is present at Asn171. Positions 213, 215, and 253 each coordinate Zn(2+). Disordered regions lie at residues 254 to 759 (ELPA…APTD) and 783 to 905 (RPDS…EPAS). Collagen-like domains are found at residues 269-324 (GPPG…TPGA), 325-356 (DGLT…GFPG), 358-403 (GIPG…GTIG), 416-472 (PPGR…GLRG), 473-516 (ITGI…AGPK), 587-643 (EKGS…GKLG), 655-712 (GPPG…GEPG), and 713-755 (LRGP…PPGR). A triple-helical region (COL3) region spans residues 269–405 (GPPGEQGPPG…PGPRGTIGFH (137 aa)). Composition is skewed to pro residues over residues 273–285 (EQGP…PPGV) and 298–307 (KGPPGPPGPA). The span at 368–383 (TAGLPGELGRVGPVGD) shows a compositional bias: low complexity. Residues 387–398 (RGPPGPPGPPGP) are compositionally biased toward pro residues. The segment at 406 to 417 (DGDPLCPNACPP) is nonhelical region (NC3). Residues 418-756 (GRSGYPGLPG…PGVQGPPGRA (339 aa)) are triple-helical region (COL2). A compositionally biased stretch (basic and acidic residues) spans 479 to 489 (DKGEKGARGLD). Low complexity-rich tracts occupy residues 602–621 (NSGK…RGPQ) and 630–650 (LGPV…SPGL). Residues 757–786 (PTDQHIKQVCMRVIQEHFAEMAASLKRPDS) form a nonhelical region (NC2) region. Positions 787-901 (GATGLPGRPG…PGPPGLPGFC (115 aa)) are triple-helical region (COL1). 2 Collagen-like domains span residues 790–847 (GLPG…GPPG) and 848–899 (RGPN…GLPG). Pro residues predominate over residues 794–804 (RPGPPGPPGPP). A compositionally biased stretch (basic and acidic residues) spans 833 to 845 (PKGDLGEKGERGP). A compositionally biased stretch (pro residues) spans 888–897 (VPGPPGPPGL). A nonhelical region (NC1) region spans residues 902–921 (EPASCTMQAGQRAFNKGPDP).

It belongs to the fibril-associated collagens with interrupted helices (FACIT) family. In terms of assembly, heterotrimer of an alpha 1(IX), an alpha 2(IX) and an alpha 3(IX) chain. Post-translationally, covalently linked to the telopeptides of type II collagen by lysine-derived cross-links. In terms of processing, prolines at the third position of the tripeptide repeating unit (G-X-Y) are hydroxylated in some or all of the chains.

Its subcellular location is the secreted. The protein resides in the extracellular space. The protein localises to the extracellular matrix. Its function is as follows. Structural component of hyaline cartilage and vitreous of the eye. The sequence is that of Collagen alpha-1(IX) chain (COL9A1) from Homo sapiens (Human).